A 387-amino-acid polypeptide reads, in one-letter code: MKFTNLSLLALSASLASARFVEQHETDQVILNSNAVTDERYLIETAPGKQQWVTEEEKWELRRNGQNFMDITETPELGTLRTSSVKVKFPSKPTLQKDLKPLLEDLSKSKMHKNLETFTSFHTRYYKSDYGRQSSEWLLEQVQTLIKDAGADKYGAHARHFKHSWGQNSIIATIPGQKNSTVVIGAHQDSINLFLPSILSAPGADDDGSGTVTILEALRVLLTSKDIIKGKGENTIEFHWYSAEEGGLLGSQAIFSEYEKTGRDVKAMLQQDMTGYTQKTLDAGEPESVGVITDFVDPDLTDFIKKIVTEYCTIDFVETRCGYACSDHASASKAGYPSAFVIESDFKYSDDRIHTSGDTLNFLNFDHMLQHARLTLGLVYELAFAKL.

An N-terminal signal peptide occupies residues Met1 to Ala18. The propeptide occupies Arg19–Lys86. A glycan (N-linked (GlcNAc...) asparagine) is linked at Asn179. 4 residues coordinate Zn(2+): His187, Asp206, Glu245, and Asp272. A disulfide bridge connects residues Cys321 and Cys325. His354 serves as a coordination point for Zn(2+).

Belongs to the peptidase M28 family. M28E subfamily. Monomer. Zn(2+) serves as cofactor.

The protein resides in the secreted. Functionally, extracellular aminopeptidase that allows assimilation of proteinaceous substrates. In Sclerotinia sclerotiorum (strain ATCC 18683 / 1980 / Ss-1) (White mold), this protein is Leucine aminopeptidase 1 (lap1).